Here is a 412-residue protein sequence, read N- to C-terminus: Divalent metal cation transporter MntH (412 aa).

Transmembrane regions (helical) follow at residues 19–39 (LSLM…GNFA), 46–66 (AAYG…AMLI), 98–118 (WVQA…GAAI), 122–142 (LLLG…TFLI), 155–175 (MVIG…LVFS), 196–216 (AVLL…IYLH), 241–261 (IAMT…AAAF), 286–306 (AAAV…TVVG), 348–368 (VLVL…VPLL), and 392–412 (LIVV…MSGI).

The protein belongs to the NRAMP family.

The protein localises to the cell inner membrane. H(+)-stimulated, divalent metal cation uptake system. The protein is Divalent metal cation transporter MntH of Pectobacterium carotovorum subsp. carotovorum (strain PC1).